The chain runs to 283 residues: 5'-nucleotidase SurE 2 (283 aa).

4 residues coordinate a divalent metal cation: Asp19, Asp20, Ser52, and Asn110.

It belongs to the SurE nucleotidase family. The cofactor is a divalent metal cation.

It is found in the cytoplasm. It catalyses the reaction a ribonucleoside 5'-phosphate + H2O = a ribonucleoside + phosphate. Its function is as follows. Nucleotidase that shows phosphatase activity on nucleoside 5'-monophosphates. In Chlamydia caviae (strain ATCC VR-813 / DSM 19441 / 03DC25 / GPIC) (Chlamydophila caviae), this protein is 5'-nucleotidase SurE 2.